The following is a 558-amino-acid chain: Undecaprenyl phosphate-alpha-4-amino-4-deoxy-L-arabinose arabinosyl transferase 1 (558 aa).

12 helical membrane-spanning segments follow: residues 4 to 24 (GAGL…LVPL), 87 to 107 (FASV…SWTV), 115 to 135 (LLAA…TYSV), 136 to 156 (LDPM…FALR), 178 to 198 (FMTK…PVAL), 207 to 227 (LGYG…WALA), 257 to 277 (APFW…LGLL), 295 to 315 (FLLL…KGKL), 316 to 336 (LTYI…YGRE), 355 to 375 (AFAL…LPWA), 383 to 403 (WPRI…AAVS), and 411 to 431 (WALA…IIPQ).

Belongs to the glycosyltransferase 83 family.

Its subcellular location is the cell inner membrane. It catalyses the reaction 4-amino-4-deoxy-alpha-L-arabinopyranosyl di-trans,octa-cis-undecaprenyl phosphate + lipid IVA = lipid IIA + di-trans,octa-cis-undecaprenyl phosphate.. Its pathway is lipopolysaccharide metabolism; 4-amino-4-deoxy-beta-L-arabinose-lipid A biosynthesis. Its function is as follows. Catalyzes the transfer of the L-Ara4N moiety of the glycolipid undecaprenyl phosphate-alpha-L-Ara4N to lipid A. The modified arabinose is attached to lipid A and is required for resistance to polymyxin and cationic antimicrobial peptides. This Sodalis glossinidius (strain morsitans) protein is Undecaprenyl phosphate-alpha-4-amino-4-deoxy-L-arabinose arabinosyl transferase 1.